The chain runs to 142 residues: Putative 2'-deoxynucleoside 5'-phosphate N-hydrolase 1 (142 aa).

Residues 4-10, Tyr-19, His-36, Glu-82, and 106-108 each bind substrate; these read FFSGSIR and SAM.

It belongs to the 2'-deoxynucleoside 5'-phosphate N-hydrolase 1 family. In terms of assembly, monomer and homodimer.

The catalysed reaction is a pyrimidine 2'-deoxyribonucleoside 5'-phosphate + H2O = a pyrimidine nucleobase + 2-deoxy-D-ribose 5-phosphate. It carries out the reaction a purine 2'-deoxyribonucleoside 5'-phosphate + H2O = a purine nucleobase + 2-deoxy-D-ribose 5-phosphate. Catalyzes the cleavage of the N-glycosidic bond of deoxyribonucleoside 5'-monophosphates to yield deoxyribose 5-phosphate and a purine or pyrimidine base. The protein is Putative 2'-deoxynucleoside 5'-phosphate N-hydrolase 1 of Syntrophotalea carbinolica (strain DSM 2380 / NBRC 103641 / GraBd1) (Pelobacter carbinolicus).